A 116-amino-acid polypeptide reads, in one-letter code: Protein Wnt-5a (116 aa).

Ser1 is lipidated: O-palmitoleoyl serine; by PORCN. N-linked (GlcNAc...) asparagine glycosylation is found at Asn69 and Asn83. Cys82 and Cys97 are joined by a disulfide.

The protein belongs to the Wnt family. Palmitoleoylation is required for efficient binding to frizzled receptors. Depalmitoleoylation leads to Wnt signaling pathway inhibition.

It localises to the secreted. It is found in the extracellular space. The protein resides in the extracellular matrix. Ligand for members of the frizzled family of seven transmembrane receptors. Can activate or inhibit canonical Wnt signaling, depending on receptor context. Required during embryogenesis for extension of the primary anterior-posterior axis. This is Protein Wnt-5a (WNT-5A) from Alopias vulpinus (Common thresher shark).